Consider the following 286-residue polypeptide: Ribosomal RNA small subunit methyltransferase H (286 aa).

S-adenosyl-L-methionine contacts are provided by residues Gly-25–His-27, Asp-45, Leu-79, Asp-93, and Gln-100.

The protein belongs to the methyltransferase superfamily. RsmH family.

The protein localises to the cytoplasm. The enzyme catalyses cytidine(1402) in 16S rRNA + S-adenosyl-L-methionine = N(4)-methylcytidine(1402) in 16S rRNA + S-adenosyl-L-homocysteine + H(+). Functionally, specifically methylates the N4 position of cytidine in position 1402 (C1402) of 16S rRNA. The protein is Ribosomal RNA small subunit methyltransferase H of Petrotoga mobilis (strain DSM 10674 / SJ95).